A 343-amino-acid chain; its full sequence is Calcium/calmodulin-dependent protein kinase type 1B (343 aa).

The Protein kinase domain occupies 15 to 270 (YEIREKLGSG…CQQALQHLWI (256 aa)). ATP contacts are provided by residues 21 to 29 (LGSGAFSEV) and K44. The active-site Proton acceptor is D136. The tract at residues 290-311 (KNFARTHWKRAFNATSFLRHIR) is calmodulin-binding. A disordered region spans residues 314–343 (GQSPEGEEASRQGMTRHSHPGLGTSQSPKW). Residue S338 is modified to Phosphoserine.

The protein belongs to the protein kinase superfamily. CAMK Ser/Thr protein kinase family. CaMK subfamily. In terms of processing, isoform 1 and isoform 2 are phosphorylated by CAMKK1. As to expression, isoform 1 is expressed in liver, heart, lung, kidney, spleen and testis. Isoform 2 is predominantly expressed in cerebrum and cerebellum.

The protein resides in the cytoplasm. Its subcellular location is the nucleus. The enzyme catalyses L-seryl-[protein] + ATP = O-phospho-L-seryl-[protein] + ADP + H(+). It catalyses the reaction L-threonyl-[protein] + ATP = O-phospho-L-threonyl-[protein] + ADP + H(+). Activated by Ca(2+)/calmodulin. Must be phosphorylated to be maximally active. Activated by CAMKK1. Its function is as follows. Calcium/calmodulin-dependent protein kinase belonging to a proposed calcium-triggered signaling cascade. In vitro, isoform 1 and isoform 2 phosphorylate CREB1, SYN1/synapsin I. Phosphorylates and activates CAMK1. This Rattus norvegicus (Rat) protein is Calcium/calmodulin-dependent protein kinase type 1B (Pnck).